Consider the following 284-residue polypeptide: Bifunctional protein FolD (284 aa).

NADP(+)-binding positions include glycine 165 to serine 167, serine 190, and valine 231.

Belongs to the tetrahydrofolate dehydrogenase/cyclohydrolase family. As to quaternary structure, homodimer.

The catalysed reaction is (6R)-5,10-methylene-5,6,7,8-tetrahydrofolate + NADP(+) = (6R)-5,10-methenyltetrahydrofolate + NADPH. The enzyme catalyses (6R)-5,10-methenyltetrahydrofolate + H2O = (6R)-10-formyltetrahydrofolate + H(+). It functions in the pathway one-carbon metabolism; tetrahydrofolate interconversion. Its function is as follows. Catalyzes the oxidation of 5,10-methylenetetrahydrofolate to 5,10-methenyltetrahydrofolate and then the hydrolysis of 5,10-methenyltetrahydrofolate to 10-formyltetrahydrofolate. The polypeptide is Bifunctional protein FolD (Bacillus licheniformis (strain ATCC 14580 / DSM 13 / JCM 2505 / CCUG 7422 / NBRC 12200 / NCIMB 9375 / NCTC 10341 / NRRL NRS-1264 / Gibson 46)).